A 126-amino-acid polypeptide reads, in one-letter code: Methylglyoxal synthase (126 aa).

The 126-residue stretch at 1–126 folds into the MGS-like domain; that stretch reads MEKKIALIAH…LIKGFEGLNT (126 aa). Substrate contacts are provided by residues H10, K14, 36–39, and 56–57; these read TGTT and SG. The Proton donor/acceptor role is filled by D62. H89 contacts substrate.

This sequence belongs to the methylglyoxal synthase family.

It carries out the reaction dihydroxyacetone phosphate = methylglyoxal + phosphate. In terms of biological role, catalyzes the formation of methylglyoxal from dihydroxyacetone phosphate. The polypeptide is Methylglyoxal synthase (Borrelia garinii subsp. bavariensis (strain ATCC BAA-2496 / DSM 23469 / PBi) (Borreliella bavariensis)).